The following is a 372-amino-acid chain: Glutamate 5-kinase (372 aa).

K14 serves as a coordination point for ATP. S54, D141, and N153 together coordinate substrate. 173-174 contacts ATP; it reads TD. One can recognise a PUA domain in the interval 280–358; the sequence is AGAVVLDNGA…ADIAAILGFV (79 aa).

This sequence belongs to the glutamate 5-kinase family.

Its subcellular location is the cytoplasm. It catalyses the reaction L-glutamate + ATP = L-glutamyl 5-phosphate + ADP. The protein operates within amino-acid biosynthesis; L-proline biosynthesis; L-glutamate 5-semialdehyde from L-glutamate: step 1/2. Its function is as follows. Catalyzes the transfer of a phosphate group to glutamate to form L-glutamate 5-phosphate. This chain is Glutamate 5-kinase, found in Janthinobacterium sp. (strain Marseille) (Minibacterium massiliensis).